The following is a 241-amino-acid chain: Putative inactive serine protease 58 (241 aa).

A signal peptide spans 1–17 (MKLAFLCILSTLLRTFA). Residues 18 to 239 (YNPDHIAGTT…YLPWIEDTMK (222 aa)) form the Peptidase S1 domain. Cysteine 41 and cysteine 57 are joined by a disulfide. Catalysis depends on charge relay system residues histidine 56 and aspartate 101. Cystine bridges form between cysteine 133–cysteine 201, cysteine 165–cysteine 180, and cysteine 191–cysteine 215. Asparagine 156 carries an N-linked (GlcNAc...) asparagine glycan.

This sequence belongs to the peptidase S1 family.

The protein resides in the secreted. The enzyme catalyses Preferential cleavage: Arg-|-Xaa, Lys-|-Xaa.. This Mus musculus (Mouse) protein is Putative inactive serine protease 58 (Prss58).